We begin with the raw amino-acid sequence, 131 residues long: Small ribosomal subunit protein bS6 (131 aa).

Positions 96–131 (VTEASPMAKAKDERDSRRGPAGDRSYDEANAEEIAE) are disordered. Residues 104-122 (KAKDERDSRRGPAGDRSYD) show a composition bias toward basic and acidic residues.

It belongs to the bacterial ribosomal protein bS6 family.

Binds together with bS18 to 16S ribosomal RNA. The sequence is that of Small ribosomal subunit protein bS6 from Shewanella sp. (strain MR-4).